The primary structure comprises 105 residues: N(4)-acetylcytidine amidohydrolase (105 aa).

One can recognise an ASCH domain in the interval 8-93; it reads TFFEFLTPLV…ALIQEIYPNI (86 aa). Lysine 22 functions as the Proton acceptor in the catalytic mechanism. Threonine 25 acts as the Nucleophile in catalysis. Glutamate 75 functions as the Proton donor in the catalytic mechanism.

Belongs to the N(4)-acetylcytidine amidohydrolase family.

It carries out the reaction N(4)-acetylcytidine + H2O = cytidine + acetate + H(+). It catalyses the reaction N(4)-acetyl-2'-deoxycytidine + H2O = 2'-deoxycytidine + acetate + H(+). The enzyme catalyses N(4)-acetylcytosine + H2O = cytosine + acetate + H(+). Catalyzes the hydrolysis of N(4)-acetylcytidine (ac4C). This Vibrio cholerae serotype O1 (strain ATCC 39315 / El Tor Inaba N16961) protein is N(4)-acetylcytidine amidohydrolase.